The sequence spans 517 residues: C-22 sterol desaturase ERG5 (517 aa).

The helical transmembrane segment at 21 to 41 (LAVAKATGSPITTLFTIIFLI) threads the bilayer. Residue Cys458 participates in heme binding.

This sequence belongs to the cytochrome P450 family. Requires heme as cofactor.

The protein localises to the endoplasmic reticulum membrane. It catalyses the reaction 5-dehydroepisterol + NADPH + O2 + H(+) = ergosta-5,7,22,24(28)-tetraen-3beta-ol + NADP(+) + 2 H2O. Its pathway is steroid metabolism; ergosterol biosynthesis; ergosterol from zymosterol: step 4/5. C-22 sterol desaturase; part of the third module of ergosterol biosynthesis pathway that includes the late steps of the pathway. ERG5 converts 5-dehydroepisterol into ergosta-5,7,22,24(28)-tetraen-3beta-ol by forming the C-22(23) double bond in the sterol side chain. The third module or late pathway involves the ergosterol synthesis itself through consecutive reactions that mainly occur in the endoplasmic reticulum (ER) membrane. Firstly, the squalene synthase ERG9 catalyzes the condensation of 2 farnesyl pyrophosphate moieties to form squalene, which is the precursor of all steroids. Squalene synthase is crucial for balancing the incorporation of farnesyl diphosphate (FPP) into sterol and nonsterol isoprene synthesis. Secondly, the squalene epoxidase ERG1 catalyzes the stereospecific oxidation of squalene to (S)-2,3-epoxysqualene, which is considered to be a rate-limiting enzyme in steroid biosynthesis. Then, the lanosterol synthase ERG7 catalyzes the cyclization of (S)-2,3 oxidosqualene to lanosterol, a reaction that forms the sterol core. In the next steps, lanosterol is transformed to zymosterol through a complex process involving various demethylation, reduction and desaturation reactions. The lanosterol 14-alpha-demethylase ERG11 (also known as CYP51) catalyzes C14-demethylation of lanosterol to produce 4,4'-dimethyl cholesta-8,14,24-triene-3-beta-ol, which is critical for ergosterol biosynthesis. The C-14 reductase ERG24 reduces the C14=C15 double bond of 4,4-dimethyl-cholesta-8,14,24-trienol to produce 4,4-dimethyl-cholesta-8,24-dienol. 4,4-dimethyl-cholesta-8,24-dienol is substrate of the C-4 demethylation complex ERG25-ERG26-ERG27 in which ERG25 catalyzes the three-step monooxygenation required for the demethylation of 4,4-dimethyl and 4alpha-methylsterols, ERG26 catalyzes the oxidative decarboxylation that results in a reduction of the 3-beta-hydroxy group at the C-3 carbon to an oxo group, and ERG27 is responsible for the reduction of the keto group on the C-3. ERG28 has a role as a scaffold to help anchor ERG25, ERG26 and ERG27 to the endoplasmic reticulum and ERG29 regulates the activity of the iron-containing C4-methylsterol oxidase ERG25. Then, the sterol 24-C-methyltransferase ERG6 catalyzes the methyl transfer from S-adenosyl-methionine to the C-24 of zymosterol to form fecosterol. The C-8 sterol isomerase ERG2 catalyzes the reaction which results in unsaturation at C-7 in the B ring of sterols and thus converts fecosterol to episterol. The sterol-C5-desaturase ERG3 then catalyzes the introduction of a C-5 double bond in the B ring to produce 5-dehydroepisterol. The C-22 sterol desaturase ERG5 further converts 5-dehydroepisterol into ergosta-5,7,22,24(28)-tetraen-3beta-ol by forming the C-22(23) double bond in the sterol side chain. Finally, ergosta-5,7,22,24(28)-tetraen-3beta-ol is substrate of the C-24(28) sterol reductase ERG4 to produce ergosterol. The polypeptide is C-22 sterol desaturase ERG5 (Candida albicans (strain SC5314 / ATCC MYA-2876) (Yeast)).